The chain runs to 111 residues: Disintegrin DS-AS (111 aa).

An N-terminal signal peptide occupies residues 1–20 (MIQVLLVIICLAVFPYQGSC). A propeptide spanning residues 21-47 (IILESGNVNDYEIVYPKKLIVLPTGAM) is cleaved from the precursor. In terms of domain architecture, Disintegrin spans 47–111 (MNSPHPCCDP…PDCPRNPYKD (65 aa)). Intrachain disulfides connect Cys-53-Cys-76, Cys-67-Cys-73, Cys-72-Cys-97, and Cys-85-Cys-104. The short motif at 89–91 (RGD) is the Cell attachment site element.

In terms of assembly, heterodimer; disulfide-linked.

It is found in the secreted. Functionally, inhibits ADP-induced platelet aggregation in human platelet-rich plasma (IC(50) is 8 uM). This chain is Disintegrin DS-AS, found in Atheris squamigera (Variable bush viper).